A 257-amino-acid chain; its full sequence is Acetylglutamate kinase (257 aa).

Substrate-binding positions include 43–44 (GG), Arg-65, and Asn-157. ATP is bound by residues 180–185 (DVSGIL) and 208–210 (IIT).

It belongs to the acetylglutamate kinase family. ArgB subfamily. Homodimer.

It localises to the cytoplasm. The enzyme catalyses N-acetyl-L-glutamate + ATP = N-acetyl-L-glutamyl 5-phosphate + ADP. It participates in amino-acid biosynthesis; L-arginine biosynthesis; N(2)-acetyl-L-ornithine from L-glutamate: step 2/4. Catalyzes the ATP-dependent phosphorylation of N-acetyl-L-glutamate. This is Acetylglutamate kinase from Pectobacterium carotovorum subsp. carotovorum (strain PC1).